Reading from the N-terminus, the 525-residue chain is Chromosomal replication initiator protein DnaA (525 aa).

Residues 1–71 (MNDFWQHCSA…SDLAREFWNT (71 aa)) form a domain I, interacts with DnaA modulators region. The domain II stretch occupies residues 71–188 (TPIEVQFVLD…GEADSMYERS (118 aa)). Residues 160–182 (AAAGRRTWRPGPGAAPANGGEAD) are disordered. A compositionally biased stretch (low complexity) spans 169–181 (PGPGAAPANGGEA). The interval 189-405 (KLNPVLTFDN…GALRKILAYS (217 aa)) is domain III, AAA+ region. Positions 233, 235, 236, and 237 each coordinate ATP. The segment at 406–525 (KFHGREISIE…LHVLEQTLKG (120 aa)) is domain IV, binds dsDNA.

The protein belongs to the DnaA family. As to quaternary structure, oligomerizes as a right-handed, spiral filament on DNA at oriC.

Its subcellular location is the cytoplasm. Its function is as follows. Plays an essential role in the initiation and regulation of chromosomal replication. ATP-DnaA binds to the origin of replication (oriC) to initiate formation of the DNA replication initiation complex once per cell cycle. Binds the DnaA box (a 9 base pair repeat at the origin) and separates the double-stranded (ds)DNA. Forms a right-handed helical filament on oriC DNA; dsDNA binds to the exterior of the filament while single-stranded (ss)DNA is stabiized in the filament's interior. The ATP-DnaA-oriC complex binds and stabilizes one strand of the AT-rich DNA unwinding element (DUE), permitting loading of DNA polymerase. After initiation quickly degrades to an ADP-DnaA complex that is not apt for DNA replication. Binds acidic phospholipids. This Burkholderia orbicola (strain MC0-3) protein is Chromosomal replication initiator protein DnaA.